The following is a 150-amino-acid chain: Interferon antagonist OPG027 (150 aa).

The protein belongs to the orthopoxvirus OPG027 family.

Its function is as follows. Inhibits antiviral activity induced by type I interferons. Does not block signal transduction of IFN, but is important to counteract the host antiviral state induced by a pre-treatment with IFN. This Homo sapiens (Human) protein is Interferon antagonist OPG027 (OPG027).